A 165-amino-acid polypeptide reads, in one-letter code: NADPH-dependent 7-cyano-7-deazaguanine reductase (165 aa).

C56 serves as the catalytic Thioimide intermediate. Catalysis depends on D63, which acts as the Proton donor. Substrate contacts are provided by residues 78-80 (VES) and 97-98 (HE).

This sequence belongs to the GTP cyclohydrolase I family. QueF type 1 subfamily.

Its subcellular location is the cytoplasm. The catalysed reaction is 7-aminomethyl-7-carbaguanine + 2 NADP(+) = 7-cyano-7-deazaguanine + 2 NADPH + 3 H(+). It functions in the pathway tRNA modification; tRNA-queuosine biosynthesis. Functionally, catalyzes the NADPH-dependent reduction of 7-cyano-7-deazaguanine (preQ0) to 7-aminomethyl-7-deazaguanine (preQ1). This chain is NADPH-dependent 7-cyano-7-deazaguanine reductase, found in Bacillus anthracis (strain A0248).